The following is a 306-amino-acid chain: tRNA dimethylallyltransferase (306 aa).

Residue Gly-11–Ser-18 coordinates ATP. Residue Thr-13–Ser-18 participates in substrate binding. The interaction with substrate tRNA stretch occupies residues Asp-35–Gln-38.

This sequence belongs to the IPP transferase family. In terms of assembly, monomer. Mg(2+) serves as cofactor.

The catalysed reaction is adenosine(37) in tRNA + dimethylallyl diphosphate = N(6)-dimethylallyladenosine(37) in tRNA + diphosphate. Functionally, catalyzes the transfer of a dimethylallyl group onto the adenine at position 37 in tRNAs that read codons beginning with uridine, leading to the formation of N6-(dimethylallyl)adenosine (i(6)A). This is tRNA dimethylallyltransferase from Borreliella burgdorferi (strain ATCC 35210 / DSM 4680 / CIP 102532 / B31) (Borrelia burgdorferi).